A 696-amino-acid chain; its full sequence is SEC14 domain and spectrin repeat-containing protein 1 (696 aa).

Positions 1–153 constitute a CRAL-TRIO domain; sequence MEASVILPIL…DFGGSLTYDH (153 aa). Spectrin repeat units lie at residues 275–378, 381–494, and 500–602; these read EEIQ…NLLQ, LEFH…LKML, and FKCE…HRLE.

The protein belongs to the SOLO family. Interacts (via the spectrin 1 repeat) with TRPC4 and TRPC5 (via CIRB domain). Interacts with CTNNB1.

Its function is as follows. May act as the primary docking protein directing membrane turnover and assembly of the transient receptor potential channels TRPC4 and TRPC5. Binds phospholipids such as phosphatidylinositol monophosphates, phosphatidylinositol diphosphates (PIP2s) and phosphatidic acid, but not less polar lipids including phosphatidylcholine, phosphatidylserine, and phosphatidylinositol. The binding to PIP2s is calcium dependent. Might be involved in the plasma membrane localization of CTNNB1. The chain is SEC14 domain and spectrin repeat-containing protein 1 (Sestd1) from Mus musculus (Mouse).